The following is a 141-amino-acid chain: Hemoglobin subunit alpha (141 aa).

Residues 1–141 (VLSPADKTNI…VSTVLTSKYR (141 aa)) form the Globin domain. S3 bears the Phosphoserine mark. K7 is subject to N6-succinyllysine. T8 is modified (phosphothreonine). N6-succinyllysine is present on K11. An N6-acetyllysine; alternate modification is found at K16. N6-succinyllysine; alternate is present on K16. The residue at position 24 (Y24) is a Phosphotyrosine. S35 carries the post-translational modification Phosphoserine. The residue at position 40 (K40) is an N6-succinyllysine. S49 carries the phosphoserine modification. Position 58 (H58) interacts with O2. Position 87 (H87) interacts with heme b. S102 bears the Phosphoserine mark. T108 is subject to Phosphothreonine. Position 124 is a phosphoserine (S124). T134 and T137 each carry phosphothreonine. At S138 the chain carries Phosphoserine.

This sequence belongs to the globin family. As to quaternary structure, heterotetramer of two alpha chains and two beta chains. As to expression, red blood cells.

Its function is as follows. Involved in oxygen transport from the lung to the various peripheral tissues. Hemopressin acts as an antagonist peptide of the cannabinoid receptor CNR1. Hemopressin-binding efficiently blocks cannabinoid receptor CNR1 and subsequent signaling. The chain is Hemoglobin subunit alpha (HBA) from Canis lupus familiaris (Dog).